Reading from the N-terminus, the 930-residue chain is Vacuolar membrane protease (930 aa).

The interval 1–28 (MPQEEVHDTSSVSDDNLTNTGGGGSNYY) is disordered. At 1–49 (MPQEEVHDTSSVSDDNLTNTGGGGSNYYNSHNQPNVFVRAIRSIFGYRK) the chain is on the cytoplasmic side. The chain crosses the membrane as a helical span at residues 50–70 (TSLTLFVILTIIFTIALSLYD). Over 71–379 (NNLDLTIELP…YFFSSPISAL (309 aa)) the chain is Vacuolar. Asn-163 carries N-linked (GlcNAc...) asparagine glycosylation. Zn(2+) contacts are provided by His-177 and Asp-189. Glu-222 serves as the catalytic Proton acceptor. Zn(2+) is bound by residues Glu-223, Glu-248, and His-320. Asn-354 carries N-linked (GlcNAc...) asparagine glycosylation. Residues 380-400 (VTINSVLIVLFPILSGPLLFI) form a helical membrane-spanning segment. Over 401–411 (TVRYKKWKIGT) the chain is Cytoplasmic. Residues 412 to 432 (SNFLSLPLAIVLTVAIVMIVV) form a helical membrane-spanning segment. Residues 433 to 449 (NQGFQIANPFLPSSHPL) lie on the Vacuolar side of the membrane. Residues 450–470 (LLVATTTSISLLIYYVFLNGV) traverse the membrane as a helical segment. Topologically, residues 471 to 480 (NWVSPSGDQK) are cytoplasmic. A helical membrane pass occupies residues 481 to 501 (LITIIEISFIYWLILIYVTHG). Residues 502–514 (LSQNKIGDDHTGE) lie on the Vacuolar side of the membrane. A helical transmembrane segment spans residues 515–535 (FPFTVLFFLEATASLFGLIGW). The Cytoplasmic segment spans residues 536 to 598 (TFSRSIKQSS…FGYDWSLQYL (63 aa)). The segment at 542-570 (KQSSNDGSDEPLLTGTAERYGSDDTDEDE) is disordered. A helical membrane pass occupies residues 599–619 (LIVPISSLIIFNSGWLVLDGI). Asn-620 carries N-linked (GlcNAc...) asparagine glycosylation. At 620–631 (NKSIQESFAAEN) the chain is on the vacuolar side. A helical transmembrane segment spans residues 632-652 (LIYLLIQLFSQFWILPILPFV). The Cytoplasmic portion of the chain corresponds to 653 to 657 (YKLNR). Residues 658-678 (FIVFGLTIFAISGVALISFLD) traverse the membrane as a helical segment. Topologically, residues 679–930 (PFNQENPLKL…LVSVSLKIEV (252 aa)) are vacuolar. Residues Asn-697, Asn-768, Asn-808, and Asn-890 are each glycosylated (N-linked (GlcNAc...) asparagine).

This sequence belongs to the peptidase M28 family. Zn(2+) serves as cofactor.

It localises to the vacuole membrane. May be involved in vacuolar sorting and osmoregulation. The sequence is that of Vacuolar membrane protease from Candida dubliniensis (strain CD36 / ATCC MYA-646 / CBS 7987 / NCPF 3949 / NRRL Y-17841) (Yeast).